We begin with the raw amino-acid sequence, 183 residues long: Threonylcarbamoyl-AMP synthase (183 aa).

Residues 1–183 (MNREQIAEAL…LRTNQLFRQG (183 aa)) enclose the YrdC-like domain.

The protein belongs to the SUA5 family. TsaC subfamily.

It is found in the cytoplasm. The catalysed reaction is L-threonine + hydrogencarbonate + ATP = L-threonylcarbamoyladenylate + diphosphate + H2O. Required for the formation of a threonylcarbamoyl group on adenosine at position 37 (t(6)A37) in tRNAs that read codons beginning with adenine. Catalyzes the conversion of L-threonine, HCO(3)(-)/CO(2) and ATP to give threonylcarbamoyl-AMP (TC-AMP) as the acyladenylate intermediate, with the release of diphosphate. This Haemophilus influenzae (strain 86-028NP) protein is Threonylcarbamoyl-AMP synthase.